A 152-amino-acid polypeptide reads, in one-letter code: Protein FYV5 (152 aa).

5 helical membrane passes run 26–46 (IISI…RICS), 56–76 (LISS…SCVL), 82–102 (VGII…VLFL), 106–126 (LIDL…TPFF), and 127–147 (FMLH…YLII).

Its subcellular location is the cell membrane. The protein localises to the secreted. It localises to the cell wall. Functionally, involved in maintaining an adequate ionic strength homeostasis of the cellular aqueous environment, necessary for normal growth rate. Required for survival upon exposure to K1 killer toxin and hence plays a role in cell wall glucan synthesis. Required for dithiothreitol (DTT) resistance. Involved in cell cycle progression. This is Protein FYV5 (FYV5) from Saccharomyces cerevisiae (strain ATCC 204508 / S288c) (Baker's yeast).